The sequence spans 473 residues: MTTTPAPERAETEAMIAEVLSQYPKKAAKFRAKHLKANDPEGSKECEVKSNIKSRPGVMTIRGCAYAGSKGVVWGPVKDMVTISHGPVGCGQYSWATRRNYAHGHLGVDNFTAMQITTDFQEKDIVFGGDPKLEQGLDEIVELFPLAKGISVQSECPIGLIGDDIEAVARVSSRLDIPVMRVRCEGFRGVSQSLGHHIANDAVRDHVLGTGGDSFEQTDYDVALIGDYNIGGDAWASRRILEEMGLRVIAQWSGDGTINEMASTHLSKLNLIHCYRSMNYICTTMEERFGTPWTEFNFFGPTKIISSMRKIAEFFDDEIKAKNRAAIAGYQRCVDEITKAFRPRLEGKRVMLAVGPAPRHTIGSYEDLGMEVVGTAAEFAHRDDYTGPTACSKEGTGLYDDPSRVFELEEVAKRPDLIGSGPKEKYIFQKMGTPIEPYHGVDGFAIFARDMARHQQPGLDLLEAPWSKAGEVA.

3 residues coordinate [8Fe-7S] cluster: Cys-64, Cys-90, and Cys-156. Cys-274 contacts [7Fe-Mo-9S-C-homocitryl] cluster.

This sequence belongs to the NifD/NifK/NifE/NifN family. In terms of assembly, tetramer of two alpha and two beta chains. Forms complex with the iron protein (nitrogenase component 2). It depends on [8Fe-7S] cluster as a cofactor. [7Fe-Mo-9S-C-homocitryl] cluster serves as cofactor.

It carries out the reaction N2 + 8 reduced [2Fe-2S]-[ferredoxin] + 16 ATP + 16 H2O = H2 + 8 oxidized [2Fe-2S]-[ferredoxin] + 2 NH4(+) + 16 ADP + 16 phosphate + 6 H(+). Its function is as follows. This molybdenum-iron protein is part of the nitrogenase complex that catalyzes the key enzymatic reactions in nitrogen fixation. This is Nitrogenase molybdenum-iron protein alpha chain (nifD) from Frankia alni.